The primary structure comprises 608 residues: Prolactin receptor (608 aa).

The first 19 residues, 1 to 19 (MSSALAYMLLVLSISLLNG), serve as a signal peptide directing secretion. At 20-229 (QSPPGKPEIH…EIPNDFTLKD (210 aa)) the chain is on the extracellular side. Fibronectin type-III domains are found at residues 22 to 122 (PPGK…IVEP) and 124 to 224 (PPRN…IPND). An intrachain disulfide couples Cys-31 to Cys-41. An N-linked (GlcNAc...) asparagine glycan is attached at Asn-54. Residues Cys-70 and Cys-81 are joined by a disulfide bond. Residues Asn-99 and Asn-127 are each glycosylated (N-linked (GlcNAc...) asparagine). The Zn(2+) site is built by Asp-206 and His-207. The short motif at 210–214 (WSRWG) is the WSXWS motif element. The helical transmembrane segment at 230 to 253 (TTVWIIVAVLSAVICLIMVWAVAL) threads the bilayer. The Cytoplasmic segment spans residues 254-608 (KGYSMMTCIF…DPTCFMHSFH (355 aa)). Positions 262-270 (IFPPVPGPK) match the Box 1 motif motif. Disordered stretches follow at residues 317–355 (DERL…HSLL), 377–419 (KPEN…TRRS), and 466–487 (GAKS…EKGP). A compositionally biased stretch (basic and acidic residues) spans 318 to 327 (ERLMPSHSKE). Low complexity predominate over residues 345-354 (GHGSYDSHSL). Positions 398-408 (CHTDTSKSTTW) are enriched in polar residues.

It belongs to the type I cytokine receptor family. Type 1 subfamily. In terms of assembly, interacts with SMARCA1. Interacts with NEK3 and VAV2 and this interaction is prolactin-dependent.

It is found in the membrane. In terms of biological role, this is a receptor for the anterior pituitary hormone prolactin. This Mus musculus (Mouse) protein is Prolactin receptor (Prlr).